We begin with the raw amino-acid sequence, 1273 residues long: MPLGRSSWICCAKYFVNTKSRFNEILPPRFTLIVSFYSMNTSENDPDGHYDFPEMTEHHSDRASSYANANNVNSTQPQLVSSEQALLAILGGGLQSITPNSVNQNAYSRSTYRTDGGLNSQPVSSLNNQWGNYNPAFLPSRYDSSFHPYTISQAANQPFPQHLLGNSNAGVAQQSGMRTIGLPPTVGSSFPQQKSSTYENFFDANSPSSQQFPSTYPSRSQNPLSSSGDGSTAIHAGPIQHQNSNAFSNYPYPLDASHLSSQQLLSMYRDQVSHGVTPSTFRNHESFMPTQLVSATELSKSVDNAVLPIPPTTAPAVVSPPASSFPLMSSAATSGNISSPALFDSELGARPEGSVAIEPSRVLLQWSSQSSSHTIPSAGASIPTSSLKSFFEHAAEAARKCNLDPRALESFEQHMLSDRLHDPVVLFHYFQIRNSICWLWIKNPTHAISRVEAQGVCVDRCLFQLASLAYEFLVRYGYINYGCLSFDSSFTNETNTGTTSSSASKQKTIAVVGAGLTGLICARQLTGLFSQYSSSFLSKNELPPKVIILEAKERTGGRIYSRALPVSHTSATQINHHTSNSNSISSNSTSLNPKDVTDPSHIPSAIDLGFQFLFSPMDDILLNLLNKQLGIEVTEMTGSDLVYDETDTKVLDMVEVKKLNILWEKLLEYVSVCFFINVEESVRISWISQFQLFIDEMFPDHLSKSLSLNASHEFSFKKTMLILIDEVSSYAKLGNSQKKFLIWCFKVAELDDTLYPLNTVDTDFSKDILIPKVARRGLSQLPWALQSYPSPLNIHYEKFVSKVTIENDKCTLDCKDNSSYEVDQVVIACSPSHFSSNIEFSPGLPNFVTENIKSIDFKPGKKVILRYAAAFWRKNIRSFGIIPKSLSQEMNNDENDGKSCFVLRIWNMLPETGVPILVADINPQMTSSSSNETSHLIQELHSLIVDHFQNDSNSSADLLDAWVTNWSRNGVYDGLNSYPNFANDKQQYEKRFRQSQLSYNLGRLHIAGDYIFSCVGCRTLQRSFLSGLSVCTGIIDSLAPISLTIPIIGETSRKELDQFLRNSKVNNFDPNAEAQRHLSYQARYRLKKQERLDEHKEEQEQLVTELLGYLPEPPSKPNANPFLLYQKMQWHVCRALADEDKRRLTGDSTAKATINETRAKLGKTWRQLDDLGKKPWIDEIAAQREAYAGKILRYQRLTKEYEMRAEQIRNDYAAKCQDEPIPDDEARLFMQAQREEEQRKQTQDDNISKSREASDEEYHDDGSSDSGYNGTRY.

Residues 199 to 230 show a composition bias toward polar residues; it reads ENFFDANSPSSQQFPSTYPSRSQNPLSSSGDG. A disordered region spans residues 199–237; it reads ENFFDANSPSSQQFPSTYPSRSQNPLSSSGDGSTAIHAG. Residues 247–307 are a coiled coil; the sequence is FSNYPYPLDA…LSKSVDNAVL (61 aa). One can recognise an SWIRM domain in the interval 394-490; the sequence is AAEAARKCNL…YGCLSFDSSF (97 aa). FAD is bound by residues 509–551, Thr517, Glu550, Arg558, and 572–573; these read IAVV…ILEA and TQ. Positions 542–1198 are demethylase activity; it reads LPPKVIILEA…GKILRYQRLT (657 aa). Positions 571-596 are disordered; it reads ATQINHHTSNSNSISSNSTSLNPKDV. Residues 574–590 show a composition bias toward low complexity; that stretch reads INHHTSNSNSISSNSTS. Residues 681–767 adopt a coiled-coil conformation; sequence SVRISWISQF…NTVDTDFSKD (87 aa). Residues 1115–1195 constitute a DNA-binding region (HMG box); the sequence is SKPNANPFLL…AYAGKILRYQ (81 aa). Residues Asp1147 and 1156 to 1157 contribute to the FAD site; that span reads ET. Positions 1215–1273 are disordered; the sequence is KCQDEPIPDDEARLFMQAQREEEQRKQTQDDNISKSREASDEEYHDDGSSDSGYNGTRY. Over residues 1233-1253 the composition is skewed to basic and acidic residues; sequence QREEEQRKQTQDDNISKSREA. Residues 1264-1273 show a composition bias toward polar residues; the sequence is SDSGYNGTRY.

The protein belongs to the flavin monoamine oxidase family. In terms of assembly, component of the SWM histone demethylase complex composed of at least lsd1, lsd2, phf1 and phf2. Interacts directly with lsd1. FAD serves as cofactor.

Its subcellular location is the nucleus. Its function is as follows. Catalytic component of the SWM histone demethylase complex that specifically demethylates H3K9me2, a specific tag for epigenetic transcriptional activation, thereby acting as a corepressor. Acts by oxidizing the substrate by FAD to generate the corresponding imine that is subsequently hydrolyzed. Has a role in regulating heterochromatin propagation and euchromatic transcription. Also has a gene activating role. In Schizosaccharomyces pombe (strain 972 / ATCC 24843) (Fission yeast), this protein is Lysine-specific histone demethylase 2 (lsd2).